Reading from the N-terminus, the 142-residue chain is Alpha-lactalbumin (142 aa).

Residues 1 to 19 form the signal peptide; it reads MMSFVSLLLVGILFHATQA. One can recognise a C-type lysozyme domain in the interval 20-142; sequence EQLTKCEVFQ…KLDQWLCEKL (123 aa). 4 disulfides stabilise this stretch: Cys25–Cys139, Cys47–Cys130, Cys80–Cys96, and Cys92–Cys110. N-linked (GlcNAc...) asparagine glycans are attached at residues Asn64 and Asn93. Ca(2+)-binding residues include Lys98, Asp101, Asp103, Asp106, and Asp107.

The protein belongs to the glycosyl hydrolase 22 family. Lactose synthase (LS) is a heterodimer of a catalytic component, beta1,4-galactosyltransferase (beta4Gal-T1) and a regulatory component, alpha-lactalbumin (LA). Mammary gland specific. Secreted in milk.

The protein localises to the secreted. Its function is as follows. Regulatory subunit of lactose synthase, changes the substrate specificity of galactosyltransferase in the mammary gland making glucose a good acceptor substrate for this enzyme. This enables LS to synthesize lactose, the major carbohydrate component of milk. In other tissues, galactosyltransferase transfers galactose onto the N-acetylglucosamine of the oligosaccharide chains in glycoproteins. This chain is Alpha-lactalbumin (LALBA), found in Capra hircus (Goat).